The following is a 412-amino-acid chain: CinA-like protein (412 aa).

The protein belongs to the CinA family.

The polypeptide is CinA-like protein (Kosmotoga olearia (strain ATCC BAA-1733 / DSM 21960 / TBF 19.5.1)).